The primary structure comprises 207 residues: LexA repressor (207 aa).

Positions 29–49 (VREICSAVDLSSTSTVHGHLA) form a DNA-binding region, H-T-H motif. Residues S128 and K166 each act as for autocatalytic cleavage activity in the active site.

It belongs to the peptidase S24 family. In terms of assembly, homodimer.

It catalyses the reaction Hydrolysis of Ala-|-Gly bond in repressor LexA.. Represses a number of genes involved in the response to DNA damage (SOS response), including recA and lexA. In the presence of single-stranded DNA, RecA interacts with LexA causing an autocatalytic cleavage which disrupts the DNA-binding part of LexA, leading to derepression of the SOS regulon and eventually DNA repair. The chain is LexA repressor from Lactobacillus gasseri (strain ATCC 33323 / DSM 20243 / BCRC 14619 / CIP 102991 / JCM 1131 / KCTC 3163 / NCIMB 11718 / NCTC 13722 / AM63).